A 447-amino-acid polypeptide reads, in one-letter code: Phosphoglucosamine mutase (447 aa).

Ser106 acts as the Phosphoserine intermediate in catalysis. Residues Ser106, Asp245, Asp247, and Asp249 each coordinate Mg(2+). Ser106 is subject to Phosphoserine.

The protein belongs to the phosphohexose mutase family. Mg(2+) is required as a cofactor. Activated by phosphorylation.

It carries out the reaction alpha-D-glucosamine 1-phosphate = D-glucosamine 6-phosphate. In terms of biological role, catalyzes the conversion of glucosamine-6-phosphate to glucosamine-1-phosphate. In Cupriavidus pinatubonensis (strain JMP 134 / LMG 1197) (Cupriavidus necator (strain JMP 134)), this protein is Phosphoglucosamine mutase.